The sequence spans 618 residues: Probable Xaa-Pro aminopeptidase P (618 aa).

Mn(2+) contacts are provided by aspartate 415, aspartate 426, glutamate 524, and glutamate 538.

It belongs to the peptidase M24B family. Mn(2+) serves as cofactor.

The enzyme catalyses Release of any N-terminal amino acid, including proline, that is linked to proline, even from a dipeptide or tripeptide.. Functionally, catalyzes the removal of a penultimate prolyl residue from the N-termini of peptides. This is Probable Xaa-Pro aminopeptidase P (AMPP) from Pyricularia oryzae (strain 70-15 / ATCC MYA-4617 / FGSC 8958) (Rice blast fungus).